The chain runs to 539 residues: Chaperonin GroEL (539 aa).

Residues 29-32, 86-90, G412, 475-477, and D491 each bind ATP; these read TLGP, DGTTT, and NAA.

It belongs to the chaperonin (HSP60) family. In terms of assembly, forms a cylinder of 14 subunits composed of two heptameric rings stacked back-to-back. Interacts with the co-chaperonin GroES.

It localises to the cytoplasm. It carries out the reaction ATP + H2O + a folded polypeptide = ADP + phosphate + an unfolded polypeptide.. Functionally, together with its co-chaperonin GroES, plays an essential role in assisting protein folding. The GroEL-GroES system forms a nano-cage that allows encapsulation of the non-native substrate proteins and provides a physical environment optimized to promote and accelerate protein folding. This chain is Chaperonin GroEL, found in Tsukamurella tyrosinosolvens.